Consider the following 277-residue polypeptide: Uridine-cytidine kinase 1 (277 aa).

The disordered stretch occupies residues 1–30 (MASAGGEDCESPAPEADRPHQRPFLIGVSG). Residue 30–38 (GGTASGKST) participates in ATP binding. Residue aspartate 65 is part of the active site. Substrate-binding residues include aspartate 87, tyrosine 115, histidine 120, arginine 169, arginine 178, and glutamine 186. ATP is bound at residue aspartate 215. Residues 247 to 277 (SYKRTFSEPGDHPGMLTSGKRSHLESSSRPH) form a disordered region. At threonine 251 the chain carries Phosphothreonine. Phosphoserine is present on serine 253. The segment covering 268–277 (SHLESSSRPH) has biased composition (basic and acidic residues).

It belongs to the uridine kinase family. As to expression, ubiquitous.

It carries out the reaction uridine + ATP = UMP + ADP + H(+). The enzyme catalyses cytidine + ATP = CMP + ADP + H(+). Its pathway is pyrimidine metabolism; CTP biosynthesis via salvage pathway; CTP from cytidine: step 1/3. The protein operates within pyrimidine metabolism; UMP biosynthesis via salvage pathway; UMP from uridine: step 1/1. Its function is as follows. Phosphorylates uridine and cytidine to uridine monophosphate and cytidine monophosphate. Does not phosphorylate deoxyribonucleosides or purine ribonucleosides. Can use ATP or GTP as a phosphate donor. Can also phosphorylate cytidine and uridine nucleoside analogs such as 6-azauridine, 5-fluorouridine, 4-thiouridine, 5-bromouridine, N(4)-acetylcytidine, N(4)-benzoylcytidine, 5-fluorocytidine, 2-thiocytidine, 5-methylcytidine, and N(4)-anisoylcytidine. The chain is Uridine-cytidine kinase 1 (UCK1) from Homo sapiens (Human).